A 234-amino-acid polypeptide reads, in one-letter code: Orotidine 5'-phosphate decarboxylase (234 aa).

Substrate is bound by residues Asp10, Lys31, 58-67 (DLKLHDIPNT), Thr121, Arg183, Gln192, Gly212, and Arg213. Lys60 serves as the catalytic Proton donor.

Belongs to the OMP decarboxylase family. Type 1 subfamily. As to quaternary structure, homodimer.

The catalysed reaction is orotidine 5'-phosphate + H(+) = UMP + CO2. The protein operates within pyrimidine metabolism; UMP biosynthesis via de novo pathway; UMP from orotate: step 2/2. Its function is as follows. Catalyzes the decarboxylation of orotidine 5'-monophosphate (OMP) to uridine 5'-monophosphate (UMP). In Halalkalibacterium halodurans (strain ATCC BAA-125 / DSM 18197 / FERM 7344 / JCM 9153 / C-125) (Bacillus halodurans), this protein is Orotidine 5'-phosphate decarboxylase.